We begin with the raw amino-acid sequence, 218 residues long: Putative glutamine transport system permease protein GlnP (218 aa).

An ABC transmembrane type-1 domain is found at Thr-19–Ala-208. Helical transmembrane passes span Tyr-25 to Val-45, Phe-57 to Pro-79, Phe-86 to Ile-108, and Phe-187 to Ile-207.

Belongs to the binding-protein-dependent transport system permease family. HisMQ subfamily.

The protein localises to the cell inner membrane. Part of the binding-protein-dependent transport system for glutamine; probably responsible for the translocation of the substrate across the membrane. The polypeptide is Putative glutamine transport system permease protein GlnP (glnP) (Rickettsia typhi (strain ATCC VR-144 / Wilmington)).